The chain runs to 239 residues: Serine protease SplC (239 aa).

A signal peptide spans 1-36; it reads MNKNIVIKSMAALAILTSATGINAAVVEETQQIANA. Catalysis depends on charge relay system residues His-75, Asp-113, and Ser-193.

It belongs to the peptidase S1B family.

Its subcellular location is the secreted. This is Serine protease SplC (splC) from Staphylococcus aureus (strain MSSA476).